Consider the following 468-residue polypeptide: Acetyl-CoA decarbonylase/synthase complex subunit gamma 2 (468 aa).

The region spanning M1 to E60 is the 4Fe-4S domain. Residues C18, C21, C26, and C43 each coordinate [4Fe-4S] cluster.

Heterodimer of delta and gamma chains. The ACDS complex is made up of alpha, epsilon, beta, gamma and delta chains with a probable stoichiometry of (alpha(2)epsilon(2))(4)-beta(8)-(gamma(1)delta(1))(8). Requires corrinoid as cofactor. [4Fe-4S] cluster serves as cofactor.

The enzyme catalyses 5,6,7,8-tetrahydrosarcinapterin + methyl-Co(III)-[corrinoid Fe-S protein] = 5-methyltetrahydrosarcinapterin + Co(I)-[corrinoid Fe-S protein] + H(+). It participates in one-carbon metabolism; methanogenesis from acetate. Its function is as follows. Part of a complex that catalyzes the reversible cleavage of acetyl-CoA, allowing growth on acetate as sole source of carbon and energy. This Methanosarcina thermophila protein is Acetyl-CoA decarbonylase/synthase complex subunit gamma 2.